The following is a 244-amino-acid chain: 5-oxoprolinase subunit A (244 aa).

This sequence belongs to the LamB/PxpA family. In terms of assembly, forms a complex composed of PxpA, PxpB and PxpC.

It carries out the reaction 5-oxo-L-proline + ATP + 2 H2O = L-glutamate + ADP + phosphate + H(+). Its function is as follows. Catalyzes the cleavage of 5-oxoproline to form L-glutamate coupled to the hydrolysis of ATP to ADP and inorganic phosphate. This Escherichia coli O7:K1 (strain IAI39 / ExPEC) protein is 5-oxoprolinase subunit A.